A 622-amino-acid chain; its full sequence is Ferredoxin-fold anticodon-binding domain-containing protein 1 homolog (622 aa).

The 94-residue stretch at 529–622 (LYPPCYVHDV…IQRQLHVSPR (94 aa)) folds into the FDX-ACB domain.

This is Ferredoxin-fold anticodon-binding domain-containing protein 1 homolog (Fdxacb1) from Mus musculus (Mouse).